The sequence spans 491 residues: Protein nucleotidyltransferase YdiU (491 aa).

ATP is bound by residues Gly94, Gly96, Arg97, Lys117, Asp129, Gly130, Arg180, and Arg187. Residue Asp256 is the Proton acceptor of the active site. Residues Asn257 and Asp266 each coordinate Mg(2+). Asp266 serves as a coordination point for ATP.

This sequence belongs to the SELO family. Mg(2+) serves as cofactor. The cofactor is Mn(2+).

The enzyme catalyses L-seryl-[protein] + ATP = 3-O-(5'-adenylyl)-L-seryl-[protein] + diphosphate. It catalyses the reaction L-threonyl-[protein] + ATP = 3-O-(5'-adenylyl)-L-threonyl-[protein] + diphosphate. The catalysed reaction is L-tyrosyl-[protein] + ATP = O-(5'-adenylyl)-L-tyrosyl-[protein] + diphosphate. It carries out the reaction L-histidyl-[protein] + UTP = N(tele)-(5'-uridylyl)-L-histidyl-[protein] + diphosphate. The enzyme catalyses L-seryl-[protein] + UTP = O-(5'-uridylyl)-L-seryl-[protein] + diphosphate. It catalyses the reaction L-tyrosyl-[protein] + UTP = O-(5'-uridylyl)-L-tyrosyl-[protein] + diphosphate. Functionally, nucleotidyltransferase involved in the post-translational modification of proteins. It can catalyze the addition of adenosine monophosphate (AMP) or uridine monophosphate (UMP) to a protein, resulting in modifications known as AMPylation and UMPylation. This Brevibacillus brevis (strain 47 / JCM 6285 / NBRC 100599) protein is Protein nucleotidyltransferase YdiU.